We begin with the raw amino-acid sequence, 195 residues long: Segregation and condensation protein B (195 aa).

This sequence belongs to the ScpB family. As to quaternary structure, homodimer. Homodimerization may be required to stabilize the binding of ScpA to the Smc head domains. Component of a cohesin-like complex composed of ScpA, ScpB and the Smc homodimer, in which ScpA and ScpB bind to the head domain of Smc. The presence of the three proteins is required for the association of the complex with DNA.

It localises to the cytoplasm. In terms of biological role, participates in chromosomal partition during cell division. May act via the formation of a condensin-like complex containing Smc and ScpA that pull DNA away from mid-cell into both cell halves. This Clostridium perfringens (strain SM101 / Type A) protein is Segregation and condensation protein B.